The following is a 908-amino-acid chain: Protein translocase subunit SecA (908 aa).

ATP contacts are provided by residues Gln87, Gly105–Thr109, and Asp507. Residues Glu860–Lys898 form a disordered region. The Zn(2+) site is built by Cys892, Cys894, Cys903, and His904.

It belongs to the SecA family. Monomer and homodimer. Part of the essential Sec protein translocation apparatus which comprises SecA, SecYEG and auxiliary proteins SecDF-YajC and YidC. It depends on Zn(2+) as a cofactor.

It localises to the cell inner membrane. It is found in the cytoplasm. The catalysed reaction is ATP + H2O + cellular proteinSide 1 = ADP + phosphate + cellular proteinSide 2.. Part of the Sec protein translocase complex. Interacts with the SecYEG preprotein conducting channel. Has a central role in coupling the hydrolysis of ATP to the transfer of proteins into and across the cell membrane, serving both as a receptor for the preprotein-SecB complex and as an ATP-driven molecular motor driving the stepwise translocation of polypeptide chains across the membrane. The sequence is that of Protein translocase subunit SecA from Methylobacillus flagellatus (strain ATCC 51484 / DSM 6875 / VKM B-1610 / KT).